A 577-amino-acid polypeptide reads, in one-letter code: Nuclear receptor subfamily 4 group A member 1 (577 aa).

The nuclear receptor DNA-binding region spans 243 to 318 (EGRCAVCGDN…VGMVKEVVRT (76 aa)). 2 consecutive NR C4-type zinc fingers follow at residues 246–266 (CAVC…CEGC) and 282–311 (CLAN…VVGM). Positions 247–333 (AVCGDNASCQ…RRGRLPSKPK (87 aa)) are required for binding NBRE-containing DNA. The NR LBD domain maps to 339–574 (SPVDLINSLV…PIVDKIFMDT (236 aa)). Residues 500 to 523 (PKKVEELQSQIINCLKEHIPSSMN) form a may bind lipopolysaccharide region. An AF-2 region spans residues 563–574 (PPPIVDKIFMDT).

The protein belongs to the nuclear hormone receptor family. NR4 subfamily. Zn(2+) is required as a cofactor.

It localises to the nucleus. The protein resides in the cytoplasm. It is found in the cytosol. Its function is as follows. Orphan nuclear receptor. Binds the NGFI-B response element (NBRE) 5'-AAAAGGTCA-3'. Functionally, in the cytosol, may detect bacterial lipopolysaccharide (LPS) and NBRE-containing mitochondrial DNA released during pyroptosis, and play a role in non-canonical inflammasome activation. The sequence is that of Nuclear receptor subfamily 4 group A member 1 (nr4a1) from Xenopus laevis (African clawed frog).